Here is a 381-residue protein sequence, read N- to C-terminus: Alkanesulfonate monooxygenase (381 aa).

Belongs to the SsuD family. In terms of assembly, homotetramer.

The catalysed reaction is an alkanesulfonate + FMNH2 + O2 = an aldehyde + FMN + sulfite + H2O + 2 H(+). Functionally, catalyzes the desulfonation of aliphatic sulfonates. In Escherichia coli O1:K1 / APEC, this protein is Alkanesulfonate monooxygenase.